We begin with the raw amino-acid sequence, 485 residues long: tRNA-2-methylthio-N(6)-dimethylallyladenosine synthase (485 aa).

One can recognise an MTTase N-terminal domain in the interval 37-154 (GKLYIKTHGC…LPELIRARRE (118 aa)). The [4Fe-4S] cluster site is built by Cys-46, Cys-83, Cys-117, Cys-191, Cys-195, and Cys-198. One can recognise a Radical SAM core domain in the interval 177-416 (RADGPSAFVS…HINAHAAGIS (240 aa)). Residues 417–480 (QRMVGSVQRV…SNSLRGRIQL (64 aa)) enclose the TRAM domain.

Belongs to the methylthiotransferase family. MiaB subfamily. As to quaternary structure, monomer. [4Fe-4S] cluster serves as cofactor.

It localises to the cytoplasm. It catalyses the reaction N(6)-dimethylallyladenosine(37) in tRNA + (sulfur carrier)-SH + AH2 + 2 S-adenosyl-L-methionine = 2-methylsulfanyl-N(6)-dimethylallyladenosine(37) in tRNA + (sulfur carrier)-H + 5'-deoxyadenosine + L-methionine + A + S-adenosyl-L-homocysteine + 2 H(+). Its function is as follows. Catalyzes the methylthiolation of N6-(dimethylallyl)adenosine (i(6)A), leading to the formation of 2-methylthio-N6-(dimethylallyl)adenosine (ms(2)i(6)A) at position 37 in tRNAs that read codons beginning with uridine. The chain is tRNA-2-methylthio-N(6)-dimethylallyladenosine synthase from Xanthomonas campestris pv. campestris (strain 8004).